We begin with the raw amino-acid sequence, 235 residues long: Small ribosomal subunit protein uS2c (235 aa).

The protein belongs to the universal ribosomal protein uS2 family.

It localises to the plastid. The protein resides in the chloroplast. The chain is Small ribosomal subunit protein uS2c (rps2) from Adiantum capillus-veneris (Maidenhair fern).